The chain runs to 299 residues: tRNA pseudouridine synthase A (299 aa).

Catalysis depends on Asp-67, which acts as the Nucleophile. Tyr-125 is a substrate binding site.

It belongs to the tRNA pseudouridine synthase TruA family. Homodimer.

The catalysed reaction is uridine(38/39/40) in tRNA = pseudouridine(38/39/40) in tRNA. Functionally, formation of pseudouridine at positions 38, 39 and 40 in the anticodon stem and loop of transfer RNAs. The chain is tRNA pseudouridine synthase A from Parasynechococcus marenigrum (strain WH8102).